The chain runs to 157 residues: MEFTHLNESGRARMVDVGGKDDTNREATARACIKMNRETISMIRDGQMKKGDVLSVAQVGGIMGAKRTSDIIPMCHNIFISGVDIEFKLHEEEIEISAVAKTRGKTGIEMEALTAVSVAALTIYDMCKAVDKGMVISDIMLIKKTGGKSGDYERESI.

Substrate-binding positions include 74-76 (MCH) and 110-111 (ME). Residue D125 is part of the active site.

The protein belongs to the MoaC family. In terms of assembly, homohexamer; trimer of dimers.

It carries out the reaction (8S)-3',8-cyclo-7,8-dihydroguanosine 5'-triphosphate = cyclic pyranopterin phosphate + diphosphate. Its pathway is cofactor biosynthesis; molybdopterin biosynthesis. Its function is as follows. Catalyzes the conversion of (8S)-3',8-cyclo-7,8-dihydroguanosine 5'-triphosphate to cyclic pyranopterin monophosphate (cPMP). This Peptoclostridium acidaminophilum (Eubacterium acidaminophilum) protein is Cyclic pyranopterin monophosphate synthase.